Here is a 330-residue protein sequence, read N- to C-terminus: MKVLVIGGAGYIGSHAVRELVKEGNDVLVLDALYTGHRKAVDPKAKFYQGDIEDTFLVSKILRDEKIDAVMHFAAYSLVPESVKKPLKYYDNNVTGMISLLQAMNDANVKYLVFSSSAATYGIPKKLPITEDTPLNPINPYGETKMMMEKIMAWADKADGIKYTALRYFNVAGASSDGSIGEDHAPETHLIPNILKSAISGDGKFTIFGDDYDTKDGTNVRDYVQVEDLIDAHILALKHMMKTNKSDVFNLGTAHGYSNLEILESAKKVTGIDIPYTMGPRRGGDPDSLVADSTKARTVLGWKPKHENVDDVIATAWKWHKSHPKGYEDK.

Residues 11–12 (YI), 31–36 (DALYTG), 51–52 (DI), 73–77 (FAAYS), asparagine 92, serine 117, tyrosine 141, lysine 145, and phenylalanine 169 contribute to the NAD(+) site. Positions 117 and 141 each coordinate substrate. Tyrosine 141 functions as the Proton acceptor in the catalytic mechanism. Substrate contacts are provided by residues asparagine 170, 189 to 190 (HL), 206 to 208 (TIF), arginine 221, and 282 to 285 (RGGD).

This sequence belongs to the NAD(P)-dependent epimerase/dehydratase family. Homodimer. The cofactor is NAD(+).

It catalyses the reaction UDP-alpha-D-glucose = UDP-alpha-D-galactose. It participates in carbohydrate metabolism; galactose metabolism. Its function is as follows. Involved in the metabolism of galactose. Catalyzes the conversion of UDP-galactose (UDP-Gal) to UDP-glucose (UDP-Glc) through a mechanism involving the transient reduction of NAD. It also could be involved in preparation of carbohydrate residues for incorporation into complex polymers, such as exopolysaccharides. The chain is UDP-glucose 4-epimerase (galE) from Lactobacillus helveticus (Lactobacillus suntoryeus).